The sequence spans 538 residues: Phosphoenolpyruvate carboxykinase (ATP) (538 aa).

The substrate site is built by Arg61, Tyr195, and Lys201. ATP contacts are provided by residues Lys201, His220, and 236-244 (GLSGTGKTT). The Mn(2+) site is built by Lys201 and His220. Position 257 (Asp257) interacts with Mn(2+). 3 residues coordinate ATP: Glu285, Arg323, and Thr449. A substrate-binding site is contributed by Arg323.

It belongs to the phosphoenolpyruvate carboxykinase (ATP) family. It depends on Mn(2+) as a cofactor.

The protein localises to the cytoplasm. The catalysed reaction is oxaloacetate + ATP = phosphoenolpyruvate + ADP + CO2. It functions in the pathway carbohydrate biosynthesis; gluconeogenesis. In terms of biological role, involved in the gluconeogenesis. Catalyzes the conversion of oxaloacetate (OAA) to phosphoenolpyruvate (PEP) through direct phosphoryl transfer between the nucleoside triphosphate and OAA. This chain is Phosphoenolpyruvate carboxykinase (ATP), found in Nitrobacter winogradskyi (strain ATCC 25391 / DSM 10237 / CIP 104748 / NCIMB 11846 / Nb-255).